A 154-amino-acid chain; its full sequence is Small heat shock protein C2 (154 aa).

The sHSP domain occupies 43-154 (STEKNLIPRT…GKTRKIEVKG (112 aa)).

It belongs to the small heat shock protein (HSP20) family.

In Rickettsia felis (strain ATCC VR-1525 / URRWXCal2) (Rickettsia azadi), this protein is Small heat shock protein C2 (hspC2).